Reading from the N-terminus, the 951-residue chain is AP-1 complex subunit beta-1 (951 aa).

At Lys318 the chain carries N6-acetyllysine. Tyr574 carries the post-translational modification 3'-nitrotyrosine.

The protein belongs to the adaptor complexes large subunit family. Adaptor protein complex 1 (AP-1) is a heterotetramer composed of two large adaptins (gamma-type subunit AP1G1 and beta-type subunit AP1B1), a medium adaptin (mu-type subunit AP1M1 or AP1M2) and a small adaptin (sigma-type subunit AP1S1 or AP1S2 or AP1S3).

The protein localises to the cytoplasmic vesicle. It is found in the clathrin-coated vesicle membrane. Its subcellular location is the golgi apparatus. Subunit of clathrin-associated adaptor protein complex 1 that plays a role in protein sorting in the late-Golgi/trans-Golgi network (TGN) and/or endosomes. The AP complexes mediate both the recruitment of clathrin to membranes and the recognition of sorting signals within the cytosolic tails of transmembrane cargo molecules. This is AP-1 complex subunit beta-1 (AP2B1) from Bos taurus (Bovine).